Consider the following 208-residue polypeptide: Putative archaetidylserine decarboxylase proenzyme (208 aa).

Catalysis depends on Ser-171, which acts as the Schiff-base intermediate with substrate; via pyruvic acid. Ser-171 carries the pyruvic acid (Ser); by autocatalysis modification.

This sequence belongs to the phosphatidylserine decarboxylase family. PSD-A subfamily. Heterodimer of a large membrane-associated beta subunit and a small pyruvoyl-containing alpha subunit. The cofactor is pyruvate. Post-translationally, is synthesized initially as an inactive proenzyme. Formation of the active enzyme involves a self-maturation process in which the active site pyruvoyl group is generated from an internal serine residue via an autocatalytic post-translational modification. Two non-identical subunits are generated from the proenzyme in this reaction, and the pyruvate is formed at the N-terminus of the alpha chain, which is derived from the carboxyl end of the proenzyme. The post-translation cleavage follows an unusual pathway, termed non-hydrolytic serinolysis, in which the side chain hydroxyl group of the serine supplies its oxygen atom to form the C-terminus of the beta chain, while the remainder of the serine residue undergoes an oxidative deamination to produce ammonia and the pyruvoyl prosthetic group on the alpha chain.

It is found in the cell membrane. The enzyme catalyses archaetidylserine + H(+) = archaetidylethanolamine + CO2. Functionally, catalyzes the formation of archaetidylethanolamine (PtdEtn) from archaetidylserine (PtdSer). The polypeptide is Putative archaetidylserine decarboxylase proenzyme (Methanococcoides burtonii (strain DSM 6242 / NBRC 107633 / OCM 468 / ACE-M)).